The following is a 381-amino-acid chain: 1-deoxy-D-xylulose 5-phosphate reductoisomerase (381 aa).

NADPH-binding residues include Thr-11, Gly-12, Ser-13, Ile-14, Asn-37, and Asn-121. 1-deoxy-D-xylulose 5-phosphate is bound at residue Lys-122. Glu-123 lines the NADPH pocket. Asp-147 provides a ligand contact to Mn(2+). The 1-deoxy-D-xylulose 5-phosphate site is built by Ser-148, Glu-149, Ser-173, and His-196. Mn(2+) is bound at residue Glu-149. Gly-202 is a binding site for NADPH. The 1-deoxy-D-xylulose 5-phosphate site is built by Ser-209, Asn-214, Lys-215, and Glu-218. Position 218 (Glu-218) interacts with Mn(2+).

Belongs to the DXR family. The cofactor is Mg(2+). Mn(2+) is required as a cofactor.

It carries out the reaction 2-C-methyl-D-erythritol 4-phosphate + NADP(+) = 1-deoxy-D-xylulose 5-phosphate + NADPH + H(+). It functions in the pathway isoprenoid biosynthesis; isopentenyl diphosphate biosynthesis via DXP pathway; isopentenyl diphosphate from 1-deoxy-D-xylulose 5-phosphate: step 1/6. Catalyzes the NADPH-dependent rearrangement and reduction of 1-deoxy-D-xylulose-5-phosphate (DXP) to 2-C-methyl-D-erythritol 4-phosphate (MEP). This Ruminiclostridium cellulolyticum (strain ATCC 35319 / DSM 5812 / JCM 6584 / H10) (Clostridium cellulolyticum) protein is 1-deoxy-D-xylulose 5-phosphate reductoisomerase.